The sequence spans 184 residues: Probable RNA 2'-phosphotransferase (184 aa).

The protein belongs to the KptA/TPT1 family.

Its function is as follows. Removes the 2'-phosphate from RNA via an intermediate in which the phosphate is ADP-ribosylated by NAD followed by a presumed transesterification to release the RNA and generate ADP-ribose 1''-2''-cyclic phosphate (APPR&gt;P). May function as an ADP-ribosylase. The polypeptide is Probable RNA 2'-phosphotransferase (Escherichia coli O139:H28 (strain E24377A / ETEC)).